Consider the following 266-residue polypeptide: Imidazole glycerol phosphate synthase subunit HisF (266 aa).

Residues aspartate 11 and aspartate 130 contribute to the active site.

This sequence belongs to the HisA/HisF family. As to quaternary structure, heterodimer of HisH and HisF.

The protein localises to the cytoplasm. It carries out the reaction 5-[(5-phospho-1-deoxy-D-ribulos-1-ylimino)methylamino]-1-(5-phospho-beta-D-ribosyl)imidazole-4-carboxamide + L-glutamine = D-erythro-1-(imidazol-4-yl)glycerol 3-phosphate + 5-amino-1-(5-phospho-beta-D-ribosyl)imidazole-4-carboxamide + L-glutamate + H(+). The protein operates within amino-acid biosynthesis; L-histidine biosynthesis; L-histidine from 5-phospho-alpha-D-ribose 1-diphosphate: step 5/9. In terms of biological role, IGPS catalyzes the conversion of PRFAR and glutamine to IGP, AICAR and glutamate. The HisF subunit catalyzes the cyclization activity that produces IGP and AICAR from PRFAR using the ammonia provided by the HisH subunit. The chain is Imidazole glycerol phosphate synthase subunit HisF from Verminephrobacter eiseniae (strain EF01-2).